Consider the following 211-residue polypeptide: Small ribosomal subunit protein eS1 (211 aa).

It belongs to the eukaryotic ribosomal protein eS1 family.

The protein is Small ribosomal subunit protein eS1 of Archaeoglobus fulgidus (strain ATCC 49558 / DSM 4304 / JCM 9628 / NBRC 100126 / VC-16).